The primary structure comprises 117 residues: Large ribosomal subunit protein bL20 (117 aa).

The protein belongs to the bacterial ribosomal protein bL20 family.

Its function is as follows. Binds directly to 23S ribosomal RNA and is necessary for the in vitro assembly process of the 50S ribosomal subunit. It is not involved in the protein synthesizing functions of that subunit. This chain is Large ribosomal subunit protein bL20, found in Magnetococcus marinus (strain ATCC BAA-1437 / JCM 17883 / MC-1).